The following is a 430-amino-acid chain: 3-phosphoshikimate 1-carboxyvinyltransferase (430 aa).

Lysine 21, serine 22, and arginine 26 together coordinate 3-phosphoshikimate. Position 21 (lysine 21) interacts with phosphoenolpyruvate. Phosphoenolpyruvate is bound by residues glycine 94 and arginine 122. 3-phosphoshikimate contacts are provided by serine 167, glutamine 169, aspartate 317, and lysine 344. Phosphoenolpyruvate is bound at residue glutamine 169. The active-site Proton acceptor is aspartate 317. The phosphoenolpyruvate site is built by arginine 348 and arginine 390.

This sequence belongs to the EPSP synthase family. In terms of assembly, monomer.

The protein localises to the cytoplasm. It catalyses the reaction 3-phosphoshikimate + phosphoenolpyruvate = 5-O-(1-carboxyvinyl)-3-phosphoshikimate + phosphate. The protein operates within metabolic intermediate biosynthesis; chorismate biosynthesis; chorismate from D-erythrose 4-phosphate and phosphoenolpyruvate: step 6/7. Catalyzes the transfer of the enolpyruvyl moiety of phosphoenolpyruvate (PEP) to the 5-hydroxyl of shikimate-3-phosphate (S3P) to produce enolpyruvyl shikimate-3-phosphate and inorganic phosphate. In Thermodesulfovibrio yellowstonii (strain ATCC 51303 / DSM 11347 / YP87), this protein is 3-phosphoshikimate 1-carboxyvinyltransferase.